We begin with the raw amino-acid sequence, 247 residues long: RNA-free ribonuclease P (247 aa).

The protein belongs to the HARP family.

The enzyme catalyses Endonucleolytic cleavage of RNA, removing 5'-extranucleotides from tRNA precursor.. Functionally, RNA-free RNase P that catalyzes the removal of the 5'-leader sequence from pre-tRNA to produce the mature 5'-terminus. This chain is RNA-free ribonuclease P, found in Methanosarcina mazei (strain ATCC BAA-159 / DSM 3647 / Goe1 / Go1 / JCM 11833 / OCM 88) (Methanosarcina frisia).